The primary structure comprises 165 residues: uncharacterized protein (165 aa).

Residues 7-29 (YPLIFTAFLLIAFCLIFFSYHLI) traverse the membrane as a helical segment.

Its subcellular location is the membrane. This is an uncharacterized protein from Bacillus subtilis (strain 168).